The chain runs to 516 residues: Nucleolar complex protein 4 homolog (516 aa).

The next 3 membrane-spanning stretches (helical) occupy residues 297-317 (ACDL…ILIH), 347-367 (FFHL…LVAA), and 375-395 (LALT…CNLL).

This sequence belongs to the CBF/MAK21 family.

The protein resides in the nucleus membrane. It localises to the nucleus. It is found in the nucleolus. This chain is Nucleolar complex protein 4 homolog (NOC4L), found in Homo sapiens (Human).